We begin with the raw amino-acid sequence, 390 residues long: Chorismate synthase 1 (390 aa).

NADP(+) is bound by residues R39 and R45. Residues E95–G117 are disordered. Residues R132–S134, N253–A254, G298, K313–T317, and R339 each bind FMN.

It belongs to the chorismate synthase family. Homotetramer. It depends on FMNH2 as a cofactor.

The catalysed reaction is 5-O-(1-carboxyvinyl)-3-phosphoshikimate = chorismate + phosphate. The protein operates within metabolic intermediate biosynthesis; chorismate biosynthesis; chorismate from D-erythrose 4-phosphate and phosphoenolpyruvate: step 7/7. Catalyzes the anti-1,4-elimination of the C-3 phosphate and the C-6 proR hydrogen from 5-enolpyruvylshikimate-3-phosphate (EPSP) to yield chorismate, which is the branch point compound that serves as the starting substrate for the three terminal pathways of aromatic amino acid biosynthesis. This reaction introduces a second double bond into the aromatic ring system. This chain is Chorismate synthase 1, found in Bacillus cereus (strain ZK / E33L).